A 373-amino-acid polypeptide reads, in one-letter code: Glutamate 5-kinase (373 aa).

Lys-15 lines the ATP pocket. 3 residues coordinate substrate: Ser-54, Asp-141, and Asn-153. Residues Ser-173–Asp-174 and Thr-215–Lys-221 contribute to the ATP site. A PUA domain is found at Arg-280–Lys-358.

Belongs to the glutamate 5-kinase family.

The protein resides in the cytoplasm. It carries out the reaction L-glutamate + ATP = L-glutamyl 5-phosphate + ADP. Its pathway is amino-acid biosynthesis; L-proline biosynthesis; L-glutamate 5-semialdehyde from L-glutamate: step 1/2. Functionally, catalyzes the transfer of a phosphate group to glutamate to form L-glutamate 5-phosphate. The chain is Glutamate 5-kinase from Syntrophotalea carbinolica (strain DSM 2380 / NBRC 103641 / GraBd1) (Pelobacter carbinolicus).